Reading from the N-terminus, the 491-residue chain is Keratin, type I cytoskeletal 24 (491 aa).

The tract at residues 1-23 (MFCSAQKGSCSSRVSSSGAVGSR) is disordered. Residues 1–117 (MFCSAQKGSC…GYDGGLLSGS (117 aa)) are head. Residues 8 to 23 (GSCSSRVSSSGAVGSR) show a composition bias toward low complexity. A coil 1A region spans residues 118–153 (EKQTMQGLNDRLANYLDKVRALEEANTDLETKIKDW). The IF rod domain occupies 118–432 (EKQTMQGLND…RLLNGDGGGC (315 aa)). The linker 1 stretch occupies residues 154-174 (YGRHGSGKDGPGRDYSQYCSV). A coil 1B region spans residues 175–266 (IEDLKNQIIS…KNHEEEMKCL (92 aa)). The interval 267–289 (QGSSGGDVTVEMNATPGTDLTKL) is linker 12. Residues 290–428 (LNDMRAQYEA…ETYRRLLNGD (139 aa)) form a coil 2 region. Residues 429 to 491 (GGGCDYRNLV…VSNISEVKIK (63 aa)) are tail.

This sequence belongs to the intermediate filament family. In terms of assembly, heterotetramer of two type I and two type II keratins.

The sequence is that of Keratin, type I cytoskeletal 24 (Krt24) from Rattus norvegicus (Rat).